The primary structure comprises 155 residues: Protein-export protein SecB (155 aa).

Belongs to the SecB family. In terms of assembly, homotetramer, a dimer of dimers. One homotetramer interacts with 1 SecA dimer.

The protein localises to the cytoplasm. In terms of biological role, one of the proteins required for the normal export of preproteins out of the cell cytoplasm. It is a molecular chaperone that binds to a subset of precursor proteins, maintaining them in a translocation-competent state. It also specifically binds to its receptor SecA. The protein is Protein-export protein SecB of Escherichia coli O127:H6 (strain E2348/69 / EPEC).